Consider the following 84-residue polypeptide: Small ribosomal subunit protein uS17 (84 aa).

This sequence belongs to the universal ribosomal protein uS17 family. As to quaternary structure, part of the 30S ribosomal subunit.

In terms of biological role, one of the primary rRNA binding proteins, it binds specifically to the 5'-end of 16S ribosomal RNA. This Borrelia garinii subsp. bavariensis (strain ATCC BAA-2496 / DSM 23469 / PBi) (Borreliella bavariensis) protein is Small ribosomal subunit protein uS17.